The sequence spans 617 residues: Secretogranin-2 (617 aa).

Residues 1 to 27 (MAEAKTHWLGAALSLIPLIFLISGAEA) form the signal peptide. Positions 28–30 (ASF) are excised as a propeptide. Residues 123 to 147 (NEPQSVPKENKPHALNSEKNFPIDM) form a disordered region. Residue tyrosine 151 is modified to Sulfotyrosine. Phosphoserine is present on residues serine 174, serine 268, serine 432, serine 532, serine 555, and serine 556. The segment at 552 to 583 (NQGSSQETDKLAPVSKRFPVGPPKNDDTPNRQ) is disordered.

It belongs to the chromogranin/secretogranin protein family. As to quaternary structure, interacts with Secretogranin III/SCG3.

It localises to the secreted. In terms of biological role, neuroendocrine protein of the granin family that regulates the biogenesis of secretory granules. The chain is Secretogranin-2 (SCG2) from Macaca fascicularis (Crab-eating macaque).